The sequence spans 376 residues: Cyclic GMP-AMP synthase-like receptor 1 (376 aa).

The Mg(2+) site is built by Glu-77 and Asp-79.

It belongs to the mab-21 family. Mg(2+) serves as cofactor. It depends on Mn(2+) as a cofactor.

The enzyme catalyses UTP + ATP = 3',3'-cUAMP + 2 diphosphate. Its function is as follows. Nucleotidyltransferase that catalyzes the formation of cyclic UMP-AMP (3',3'-cUAMP) from ATP and UTP and plays a key role in innate immunity. Acts as a key sensor of double-stranded RNA (dsRNA), the presence of dsRNA in the cytoplasm being a danger signal that triggers the immune responses. Directly binds dsRNA, activating the nucleotidyltransferase activity, leading to synthesis of 3',3'-cUAMP, a second messenger that binds to and activates Sting, thereby triggering the immune response via activation of the NF-kappa-B transcription factor. The chain is Cyclic GMP-AMP synthase-like receptor 1 from Stylophora pistillata (Smooth cauliflower coral).